Here is a 287-residue protein sequence, read N- to C-terminus: tRNA pseudouridine synthase B (287 aa).

Asp37 acts as the Nucleophile in catalysis.

It belongs to the pseudouridine synthase TruB family. Type 1 subfamily.

It carries out the reaction uridine(55) in tRNA = pseudouridine(55) in tRNA. Functionally, responsible for synthesis of pseudouridine from uracil-55 in the psi GC loop of transfer RNAs. The sequence is that of tRNA pseudouridine synthase B from Caldicellulosiruptor saccharolyticus (strain ATCC 43494 / DSM 8903 / Tp8T 6331).